The following is a 427-amino-acid chain: Histidine--tRNA ligase (427 aa).

It belongs to the class-II aminoacyl-tRNA synthetase family. In terms of assembly, homodimer.

The protein localises to the cytoplasm. The enzyme catalyses tRNA(His) + L-histidine + ATP = L-histidyl-tRNA(His) + AMP + diphosphate + H(+). In Corynebacterium urealyticum (strain ATCC 43042 / DSM 7109), this protein is Histidine--tRNA ligase.